A 463-amino-acid chain; its full sequence is uncharacterized protein (463 aa).

This is an uncharacterized protein from Ostreid herpesvirus 1 (isolate France) (OsHV-1).